The sequence spans 87 residues: MSERNQRKVYTGRVVSDKMDKTITVLVETYKTHSLYGKRVKYSKKYKAHDEQNQAKLGDIVKIMETRPLSATKRFRLDEIVEEAVII.

It belongs to the universal ribosomal protein uS17 family. As to quaternary structure, part of the 30S ribosomal subunit.

Functionally, one of the primary rRNA binding proteins, it binds specifically to the 5'-end of 16S ribosomal RNA. In Bacillus cereus (strain ATCC 14579 / DSM 31 / CCUG 7414 / JCM 2152 / NBRC 15305 / NCIMB 9373 / NCTC 2599 / NRRL B-3711), this protein is Small ribosomal subunit protein uS17.